The primary structure comprises 272 residues: Undecaprenyl-diphosphatase (272 aa).

8 consecutive transmembrane segments (helical) span residues 5 to 25, 45 to 65, 88 to 108, 114 to 134, 153 to 172, 189 to 209, 221 to 241, and 251 to 271; these read YSLF…FLPV, AKTF…VVFW, HLTL…GLAF, ALFD…LLLA, YRQA…PGFS, YAAS…ASGL, GDLP…LIAI, and ISFV…YWVF.

It belongs to the UppP family.

It is found in the cell inner membrane. It catalyses the reaction di-trans,octa-cis-undecaprenyl diphosphate + H2O = di-trans,octa-cis-undecaprenyl phosphate + phosphate + H(+). In terms of biological role, catalyzes the dephosphorylation of undecaprenyl diphosphate (UPP). Confers resistance to bacitracin. The polypeptide is Undecaprenyl-diphosphatase (Yersinia pseudotuberculosis serotype IB (strain PB1/+)).